The sequence spans 130 residues: Serum amyloid A-4 protein (130 aa).

A signal peptide spans 1–18 (MRLATVIVLCSLFLGVSG). Positions 109–130 (EEWGRSGKNPNHFRPEGLPEKF) are disordered. The span at 121 to 130 (FRPEGLPEKF) shows a compositional bias: basic and acidic residues.

This sequence belongs to the SAA family. As to quaternary structure, apolipoprotein of the HDL complex. Expressed by the liver; secreted in plasma.

Its subcellular location is the secreted. Functionally, major acute phase reactant. The sequence is that of Serum amyloid A-4 protein from Mus musculus (Mouse).